The following is a 1254-amino-acid chain: Structural polyprotein (1254 aa).

A necessary for nucleocapsid assembly and virus assembly region spans residues 1–33; it reads MFPYQPMYPMQPMPFRNPFAAPRRPWFPRTDPF. The host transcription inhibition stretch occupies residues 33 to 68; it reads FLAMQVQELARSMANLTFKQRRDVPPEGPPAKKKKK. Residues 41 to 48 carry the Supraphysiological nuclear export signal motif; that stretch reads LARSMANL. The tract at residues 48–119 is disordered; it reads LTFKQRRDVP…KPGKRQRMVM (72 aa). The Nuclear localization signal signature appears at 64–68; the sequence is KKKKK. 2 stretches are compositionally biased toward basic residues: residues 79–93 and 102–117; these read NGKKKNKLVKKKKKT and GGKKKVNKKPGKRQRM. The segment at 91 to 126 is binding to the viral RNA; that stretch reads KKTGPPPQKTNGGKKKVNKKPGKRQRMVMKLESDKT. Position 93 is a phosphothreonine (threonine 93). Residues 111–125 form a ribosome-binding region; sequence PGKRQRMVMKLESDK. Serine 123 carries the phosphoserine modification. The 150-residue stretch at 125-274 folds into the Peptidase S3 domain; it reads KTFPIMLDGR…KYTPENSEQW (150 aa). Threonine 126 is modified (phosphothreonine). Catalysis depends on histidine 151, which acts as the Charge relay system. The tract at residues 167 to 172 is interaction with spike glycoprotein E2; that stretch reads KKASKY. Active-site charge relay system residues include aspartate 173 and serine 225. The interaction with spike glycoprotein E2 stretch occupies residues 259–263; the sequence is EKGVT. The segment at 275–286 is functions as an uncleaved signal peptide for the precursor of protein E3/E2; it reads SLVTTMCLLANV. Residues 275 to 700 are Extracellular-facing; that stretch reads SLVTTMCLLA…HYYHRYPMST (426 aa). Cystine bridges form between cysteine 281–cysteine 290, cysteine 352–cysteine 456, cysteine 355–cysteine 360, cysteine 423–cysteine 437, cysteine 484–cysteine 599, cysteine 533–cysteine 559, and cysteine 535–cysteine 553. N-linked (GlcNAc...) asparagine; by host glycosylation occurs at asparagine 285. N-linked (GlcNAc...) asparagine; by host glycosylation is present at asparagine 651. A helical transmembrane segment spans residues 701-721; sequence ILGLSICAAIVTTSIAASVWL. Topologically, residues 722–756 are cytoplasmic; the sequence is FCKSRISCLTPYRLTPNARMPLCLAVLCCARTARA. The segment at 724–728 is interaction with the capsid protein; that stretch reads KSRIS. S-palmitoyl cysteine; by host attachment occurs at residues cysteine 729, cysteine 749, and cysteine 750. The segment at 729–749 is transient transmembrane before p62-6K protein processing; that stretch reads CLTPYRLTPNARMPLCLAVLC. A disulfide bond links cysteine 729 and cysteine 750. Residues 757–771 lie on the Extracellular side of the membrane; that stretch reads ETTWESLDHLWNHNQ. Transmembrane regions (helical) follow at residues 772 to 790 and 791 to 811; these read QMFWSQLLIPLAALIVATR and LLKCVCCVVPFLVVAGAVGAG. At 812–1224 the chain is on the extracellular side; the sequence is AYEHATTMPN…SKTAWTWLTS (413 aa). 4 disulfides stabilise this stretch: cysteine 861-cysteine 926, cysteine 874-cysteine 906, cysteine 875-cysteine 908, and cysteine 880-cysteine 890. The segment at 896–913 is E1 fusion peptide loop; the sequence is VYPFMWGGAYCFCDTENT. N-linked (GlcNAc...) asparagine; by host glycans are attached at residues asparagine 946 and asparagine 1082. 4 disulfide bridges follow: cysteine 1071-cysteine 1083, cysteine 1113-cysteine 1188, cysteine 1118-cysteine 1192, and cysteine 1140-cysteine 1182. The chain crosses the membrane as a helical span at residues 1225–1245; the sequence is LLGGSAIIIIIGLVLATIVAM. Residues 1246–1254 are Cytoplasmic-facing; that stretch reads YVLTNQKHN.

Homodimer. Homomultimer. Interacts with host karyopherin KPNA4; this interaction allows the nuclear import of the viral capsid protein. Interacts with spike glycoprotein E2. Interacts with host IRAK1; the interaction leads to inhibition of IRAK1-dependent signaling. Part of a tetrameric complex composed of host CRM1, host importin alpha/beta dimer and the viral capsid; this complex blocks the receptor-mediated transport through the nuclear pore. Interacts with host phosphatase PPP1CA; this interaction dephosphorylates the capsid protein, which increases its ability to bind to the viral genome. As to quaternary structure, the precursor of protein E3/E2 and E1 form a heterodimer shortly after synthesis. In terms of assembly, interacts with spike glycoprotein E2. The precursor of protein E3/E2 and E1 form a heterodimer shortly after synthesis. Processing of the precursor of protein E3/E2 into E2 and E3 results in a heterodimer of the spike glycoproteins E2 and E1. Spike at virion surface are constituted of three E2-E1 heterodimers. After target cell attachment and endocytosis, E1 change conformation to form homotrimers. Interacts with 6K protein. Interacts with host LDLRAD3; this interaction mediates viral entry to the host cell. Interacts with spike glycoprotein E1. Processing of the precursor of protein E3/E2 into E2 and E3 results in a heterodimer of the spike glycoproteins E2 and E1. Spike at virion surface are constituted of a trimer of E2-E1 heterodimers. Interacts with 6K protein. Interacts with host LDLRAD3; this interaction mediates viral entry to the host cell. As to quaternary structure, oligomer. Interacts with spike glycoprotein E1. Interacts with spike glycoprotein E2. Structural polyprotein: Specific enzymatic cleavages in vivo yield mature proteins. Capsid protein is auto-cleaved during polyprotein translation, unmasking a signal peptide at the N-terminus of the precursor of E3/E2. The remaining polyprotein is then targeted to the host endoplasmic reticulum, where host signal peptidase cleaves it into pE2, 6K and E1 proteins. pE2 is further processed to mature E3 and E2 by host furin in trans-Golgi vesicle. In terms of processing, phosphorylated on serine and threonine residues. Post-translationally, palmitoylated via thioester bonds. These palmitoylations may induce disruption of the C-terminus transmembrane. This would result in the reorientation of E2 C-terminus from lumenal to cytoplasmic side. N-glycosylated. In terms of processing, palmitoylated via thioester bonds.

The protein localises to the virion. It is found in the host cytoplasm. It localises to the host cell membrane. Its subcellular location is the host nucleus. The protein resides in the virion membrane. The protein localises to the host Golgi apparatus. It is found in the host trans-Golgi network. It localises to the host endoplasmic reticulum. It carries out the reaction Autocatalytic release of the core protein from the N-terminus of the togavirus structural polyprotein by hydrolysis of a -Trp-|-Ser- bond.. Functionally, forms an icosahedral capsid with a T=4 symmetry composed of 240 copies of the capsid protein surrounded by a lipid membrane through which penetrate 80 spikes composed of trimers of E1-E2 heterodimers. The capsid protein binds to the viral RNA genome at a site adjacent to a ribosome binding site for viral genome translation following genome release. Possesses a protease activity that results in its autocatalytic cleavage from the nascent structural protein. Following its self-cleavage, the capsid protein transiently associates with ribosomes, and within several minutes the protein binds to viral RNA and rapidly assembles into icosahedric core particles. The resulting nucleocapsid eventually associates with the cytoplasmic domain of the spike glycoprotein E2 at the cell membrane, leading to budding and formation of mature virions. In case of infection, new virions attach to target cells and after clathrin-mediated endocytosis their membrane fuses with the host endosomal membrane. This leads to the release of the nucleocapsid into the cytoplasm, followed by an uncoating event necessary for the genomic RNA to become accessible. The uncoating might be triggered by the interaction of capsid proteins with ribosomes. Binding of ribosomes would release the genomic RNA since the same region is genomic RNA-binding and ribosome-binding. Specifically inhibits interleukin-1 receptor-associated kinase 1/IRAK1-dependent signaling during viral entry, representing a means by which the alphaviruses may evade innate immune detection and activation prior to viral gene expression. Inhibits host transcription. Forms a tetrameric complex with XPO1/CRM1 and the nuclear import receptor importin. This complex blocks the central channel of host nuclear pores thereby inhibiting the receptor-mediated nuclear transport and thus the host mRNA and rRNA transcription. The inhibition of transcription is linked to a cytopathic effect on the host cell. Provides the signal sequence for the translocation of the precursor of protein E3/E2 to the host endoplasmic reticulum. Furin-cleaved E3 remains associated with spike glycoprotein E1 and mediates pH protection of the latter during the transport via the secretory pathway. After virion release from the host cell, the assembly protein E3 is gradually released in the extracellular space. In terms of biological role, plays a role in viral attachment to target host cell, by binding to the cell receptor LDLRAD3. Synthesized as a p62 precursor which is processed by furin at the cell membrane just before virion budding, giving rise to E2-E1 heterodimer. The p62-E1 heterodimer is stable, whereas E2-E1 is unstable and dissociate at low pH. p62 is processed at the last step, presumably to avoid E1 fusion activation before its final export to cell surface. E2 C-terminus contains a transitory transmembrane that would be disrupted by palmitoylation, resulting in reorientation of the C-terminal tail from lumenal to cytoplasmic side. This step is critical since E2 C-terminus is involved in budding by interacting with capsid proteins. This release of E2 C-terminus in cytoplasm occurs lately in protein export, and precludes premature assembly of particles at the endoplasmic reticulum membrane. Its function is as follows. Acts as a viroporin that participates in virus glycoprotein processing and transport to the plasma membrane, cell permeabilization and budding of viral particles. Disrupts the calcium homeostasis of the cell, probably at the endoplasmic reticulum level. This leads to cytoplasmic calcium elevation. Because of its lipophilic properties, the 6K protein is postulated to influence the selection of lipids that interact with the transmembrane domains of the glycoproteins, which, in turn, affects the deformability of the bilayer required for the extreme curvature that occurs as budding proceeds. Present in low amount in virions, about 3% compared to viral glycoproteins. Functionally, class II viral fusion protein. Fusion activity is inactive as long as E1 is bound to E2 in mature virion. After virus attachment to cell receptor LDLRAD3 and endocytosis, acidification of the endosome induce dissociation of E1/E2 heterodimer and concomitant trimerization of the E1 subunits. This E1 trimer is fusion active, and promotes release of viral nucleocapsid in cytoplasm after endosome and viral membrane fusion. Efficient fusion requires the presence of cholesterol and sphingolipid in the target membrane. In Venezuelan equine encephalitis virus (strain Mena II) (VEEV), this protein is Structural polyprotein.